The chain runs to 223 residues: Ubiquitin carboxyl-terminal hydrolase isozyme L1 (223 aa).

M1 bears the N-acetylmethionine mark. Positions 2 to 221 (QLKPMEINPE…VRFSAVALCK (220 aa)) constitute a UCH catalytic domain. The interval 5 to 10 (PMEINP) is interaction with ubiquitin. The active-site Nucleophile is the C90. S125 is modified (phosphoserine). Residue H161 is the Proton donor of the active site. The interaction with ubiquitin stretch occupies residues 211 to 216 (EVRFSA). The S-farnesyl cysteine moiety is linked to residue C220. Residues 221-223 (KAA) constitute a propeptide, removed in mature form.

Belongs to the peptidase C12 family. Monomer. Homodimer. Interacts with SNCA. Interacts with COPS5. In terms of processing, O-glycosylated. In terms of tissue distribution, found in neuronal cell bodies and processes throughout the neocortex (at protein level). Expressed in neurons and cells of the diffuse neuroendocrine system and their tumors. Weakly expressed in ovary. Down-regulated in brains from Parkinson disease and Alzheimer disease patients.

It is found in the cytoplasm. The protein resides in the endoplasmic reticulum membrane. It catalyses the reaction Thiol-dependent hydrolysis of ester, thioester, amide, peptide and isopeptide bonds formed by the C-terminal Gly of ubiquitin (a 76-residue protein attached to proteins as an intracellular targeting signal).. Functionally, deubiquitinase that plays a role in the regulation of several processes such as maintenance of synaptic function, cardiac function, inflammatory response or osteoclastogenesis. Abrogates the ubiquitination of multiple proteins including WWTR1/TAZ, EGFR, HIF1A and beta-site amyloid precursor protein cleaving enzyme 1/BACE1. In addition, recognizes and hydrolyzes a peptide bond at the C-terminal glycine of ubiquitin to maintain a stable pool of monoubiquitin that is a key requirement for the ubiquitin-proteasome and the autophagy-lysosome pathways. Regulates amyloid precursor protein/APP processing by promoting BACE1 degradation resulting in decreased amyloid beta production. Plays a role in the immune response by regulating the ability of MHC I molecules to reach cross-presentation compartments competent for generating Ag-MHC I complexes. Mediates the 'Lys-48'-linked deubiquitination of the transcriptional coactivator WWTR1/TAZ leading to its stabilization and inhibition of osteoclastogenesis. Deubiquitinates and stabilizes epidermal growth factor receptor EGFR to prevent its degradation and to activate its downstream mediators. Modulates oxidative activity in skeletal muscle by regulating key mitochondrial oxidative proteins. Enhances the activity of hypoxia-inducible factor 1-alpha/HIF1A by abrogateing its VHL E3 ligase-mediated ubiquitination and consequently inhibiting its degradation. The protein is Ubiquitin carboxyl-terminal hydrolase isozyme L1 (UCHL1) of Homo sapiens (Human).